We begin with the raw amino-acid sequence, 645 residues long: Leucine-rich repeat protein soc-2 homolog (645 aa).

Residues 1 to 19 (MNLCSSGATASTTSLSSTG) are compositionally biased toward low complexity. Disordered regions lie at residues 1-67 (MNLC…AGGS) and 83-151 (NSPA…IQAD). Gly residues-rich tracts occupy residues 26–49 (GVPG…GGGS) and 88–97 (GAGGASGSTG). The segment covering 98 to 107 (SGQQPTGSNG) has biased composition (low complexity). LRR repeat units lie at residues 165-186 (GIKR…VKEC), 188-209 (HLTE…IGCL), 211-232 (SLRN…LQNC), 234-255 (QLKV…IYRL), 257-278 (SLTT…LRQL), 280-301 (NLTM…IGAL), 303-324 (NLTT…IGNC), 326-347 (NLSA…IGNL), 349-371 (SLVR…KNCK), 372-393 (SMDE…MLAS), 396-417 (GLTT…GPAQ), 420-441 (NVYS…IFSR), 444-465 (GLTK…IGTW), 467-488 (NMVE…IMNL), 490-511 (NLEI…IGNL), 513-534 (RLRI…IGLL), 536-557 (ELQR…IGHL), 559-580 (NLTH…IGSL), 582-604 (SLEN…LALC), and 606-627 (NLKY…IQAG).

This sequence belongs to the SHOC2 family.

Its function is as follows. Acts as a Ras effector and participates in MAPK pathway activation. Probably acts as a regulatory subunit of protein phosphatase that specifically dephosphorylates Raf kinase and stimulate Raf activity at specialized signaling complexes upon Ras activation. This Drosophila yakuba (Fruit fly) protein is Leucine-rich repeat protein soc-2 homolog (Sur-8).